Consider the following 715-residue polypeptide: ATP-dependent DNA helicase Hel308 (715 aa).

A Q motif motif is present at residues methionine 1 to alanine 29. ATP is bound by residues glutamine 28 and isoleucine 46–threonine 53. In terms of domain architecture, Helicase ATP-binding spans threonine 33–aspartate 197. The DEAH box signature appears at aspartate 145–histidine 148. A Helicase C-terminal domain is found at leucine 229 to isoleucine 422.

This sequence belongs to the helicase family. Hel308 subfamily. Monomer.

The catalysed reaction is Couples ATP hydrolysis with the unwinding of duplex DNA by translocating in the 3'-5' direction.. The enzyme catalyses ATP + H2O = ADP + phosphate + H(+). DNA-dependent ATPase and 3'-5' DNA helicase that may be involved in repair of stalled replication forks. The sequence is that of ATP-dependent DNA helicase Hel308 from Pyrococcus horikoshii (strain ATCC 700860 / DSM 12428 / JCM 9974 / NBRC 100139 / OT-3).